The primary structure comprises 122 residues: Large ribosomal subunit protein uL14c (122 aa).

The protein belongs to the universal ribosomal protein uL14 family. In terms of assembly, part of the 50S ribosomal subunit.

It localises to the plastid. Its subcellular location is the chloroplast. Functionally, binds to 23S rRNA. This Physcomitrium patens (Spreading-leaved earth moss) protein is Large ribosomal subunit protein uL14c.